Consider the following 134-residue polypeptide: Mediator of RNA polymerase II transcription subunit 10 (134 aa).

Belongs to the Mediator complex subunit 10 family. Component of the Mediator complex.

Its subcellular location is the nucleus. In terms of biological role, component of the Mediator complex, a coactivator involved in the regulated transcription of nearly all RNA polymerase II-dependent genes. Mediator functions as a bridge to convey information from gene-specific regulatory proteins to the basal RNA polymerase II transcription machinery. Mediator is recruited to promoters by direct interactions with regulatory proteins and serves as a scaffold for the assembly of a functional preinitiation complex with RNA polymerase II and the general transcription factors. Negatively regulates the Wnt signaling pathway and positively regulates the Nodal signaling pathway. Required for cardiac cushion formation. This is Mediator of RNA polymerase II transcription subunit 10 (med10) from Danio rerio (Zebrafish).